An 83-amino-acid chain; its full sequence is Cytochrome b559 subunit alpha (83 aa).

A helical transmembrane segment spans residues 21–35 (VIHSITIPSLFIAGW). Histidine 23 is a binding site for heme.

Belongs to the PsbE/PsbF family. In terms of assembly, heterodimer of an alpha subunit and a beta subunit. PSII is composed of 1 copy each of membrane proteins PsbA, PsbB, PsbC, PsbD, PsbE, PsbF, PsbH, PsbI, PsbJ, PsbK, PsbL, PsbM, PsbT, PsbX, PsbY, PsbZ, Psb30/Ycf12, at least 3 peripheral proteins of the oxygen-evolving complex and a large number of cofactors. It forms dimeric complexes. Heme b is required as a cofactor.

Its subcellular location is the plastid. It is found in the chloroplast thylakoid membrane. Functionally, this b-type cytochrome is tightly associated with the reaction center of photosystem II (PSII). PSII is a light-driven water:plastoquinone oxidoreductase that uses light energy to abstract electrons from H(2)O, generating O(2) and a proton gradient subsequently used for ATP formation. It consists of a core antenna complex that captures photons, and an electron transfer chain that converts photonic excitation into a charge separation. This is Cytochrome b559 subunit alpha from Phalaenopsis aphrodite subsp. formosana (Moth orchid).